Here is a 369-residue protein sequence, read N- to C-terminus: S-adenosylmethionine:tRNA ribosyltransferase-isomerase (369 aa).

It belongs to the QueA family. Monomer.

Its subcellular location is the cytoplasm. It carries out the reaction 7-aminomethyl-7-carbaguanosine(34) in tRNA + S-adenosyl-L-methionine = epoxyqueuosine(34) in tRNA + adenine + L-methionine + 2 H(+). It participates in tRNA modification; tRNA-queuosine biosynthesis. In terms of biological role, transfers and isomerizes the ribose moiety from AdoMet to the 7-aminomethyl group of 7-deazaguanine (preQ1-tRNA) to give epoxyqueuosine (oQ-tRNA). The protein is S-adenosylmethionine:tRNA ribosyltransferase-isomerase of Acaryochloris marina (strain MBIC 11017).